A 541-amino-acid chain; its full sequence is Chaperonin GroEL (541 aa).

ATP contacts are provided by residues 30–33, Lys51, 87–91, Gly415, and Asp495; these read TLGP and DGTTT.

This sequence belongs to the chaperonin (HSP60) family. As to quaternary structure, forms a cylinder of 14 subunits composed of two heptameric rings stacked back-to-back. Interacts with the co-chaperonin GroES.

It localises to the cytoplasm. It carries out the reaction ATP + H2O + a folded polypeptide = ADP + phosphate + an unfolded polypeptide.. In terms of biological role, together with its co-chaperonin GroES, plays an essential role in assisting protein folding. The GroEL-GroES system forms a nano-cage that allows encapsulation of the non-native substrate proteins and provides a physical environment optimized to promote and accelerate protein folding. The chain is Chaperonin GroEL from Pantoea ananas (Erwinia uredovora).